We begin with the raw amino-acid sequence, 315 residues long: Eukaryotic translation initiation factor 2 subunit 1 (315 aa).

The S1 motif domain maps to 17 to 88; that stretch reads EDVVMVNVRS…EKGYIDLSKR (72 aa). Ser49 carries the post-translational modification Phosphoserine; by HRI. Phosphoserine is present on Ser52. Lys141 carries the N6-acetyllysine modification. Residue Ser158 is modified to Phosphoserine. Phosphothreonine is present on residues Thr279 and Thr281. The disordered stretch occupies residues 293–315; that stretch reads LERENAEVDGDDDAEEMEAKAED. Residues 299-308 are compositionally biased toward acidic residues; that stretch reads EVDGDDDAEE.

Belongs to the eIF-2-alpha family. Eukaryotic translation initiation factor 2 eIF2 is a heterotrimeric complex composed of an alpha (EIF2S1), a beta (EIF2S2) and a gamma (EIF2S3) chain. eIF2 is member of the 43S pre-initiation complex (43S PIC). eIF2 forms a complex with at least CELF1/CUGBP1, CALR, CALR3, EIF2S1, EIF2S2, HSP90B1 and HSPA5. Interaction with METAP2 protects EIF2S1 from inhibitory phosphorylation. Interacts with ABCF1. Associates with ribosomes. Interacts with DDX3X in an RNA-independent manner. Phosphorylation at Ser-49 and Ser-52 stabilizes the eIF-2/GDP/eIF2B complex and prevents GDP/GTP exchange reaction, thus impairing the recycling of eIF-2 between successive rounds of initiation and leading to global inhibition of translation, while concomitantly initiating the preferential translation of integrated stress response (ISR)-specific mRNAs. Substrate for at least 4 kinases: EIF2AK1/HRI, EIF2AK2/PKR, EIF2AK3/PERK and EIF2AK4/GCN2. Phosphorylation on Ser-52 by the EIF2AK4/GCN2 protein kinase occurs in response to amino acid starvation and UV irradiation. Phosphorylation at Ser-52 by the EIF2AK3/PERK protein kinase occurs in response to the unfolded protein response. Phosphorylation at Ser-52 by EIF2AK1/HRI in response to mitochondrial damage promotes relocalization to the mitochondrial surface.

The protein localises to the cytoplasm. Its subcellular location is the stress granule. It is found in the cytosol. The protein resides in the mitochondrion. Its activity is regulated as follows. Activity is regulated by phosphorylation at Ser-49 and Ser-52, which stabilizes the eIF2/GDP/eIF2B complex and prevents the eIF2B-mediated exchange of GDP for GTP, thereby preventing the formation of the 43S pre-initiation complex (43S PIC). This results in the global attenuation of 5' cap-dependent protein synthesis and concomitant translation of ISR-specific mRNAs that contain a short upstream open reading frame (uORF) in their 5' UTR, such as ATF4, ATF5, DDIT3/CHOP and PPP1R15A/GADD34. Its function is as follows. Member of the eIF2 complex that functions in the early steps of protein synthesis by forming a ternary complex with GTP and initiator tRNA. This complex binds to a 40S ribosomal subunit, followed by mRNA binding to form a 43S pre-initiation complex. Junction of the 60S ribosomal subunit to form the 80S initiation complex is preceded by hydrolysis of the GTP bound to eIF2 and release of an eIF2-GDP binary complex. In order for eIF2 to recycle and catalyze another round of initiation, the GDP bound to eIF2 must exchange with GTP by way of a reaction catalyzed by eIF2B. EIF2S1/eIF2-alpha is a key component of the integrated stress response (ISR), required for adaptation to various stress: phosphorylation by metabolic-stress sensing protein kinases (EIF2AK1/HRI, EIF2AK2/PKR, EIF2AK3/PERK and EIF2AK4/GCN2) in response to stress converts EIF2S1/eIF2-alpha in a global protein synthesis inhibitor, leading to a attenuation of cap-dependent translation, while concomitantly initiating the preferential translation of ISR-specific mRNAs, such as the transcriptional activators ATF4 and QRICH1, and hence allowing ATF4- and QRICH1-mediated reprogramming. EIF2S1/eIF2-alpha also acts as an activator of mitophagy in response to mitochondrial damage: phosphorylation by EIF2AK1/HRI promotes relocalization to the mitochondrial surface, thereby triggering PRKN-independent mitophagy. This is Eukaryotic translation initiation factor 2 subunit 1 (EIF2S1) from Pongo abelii (Sumatran orangutan).